A 35-amino-acid polypeptide reads, in one-letter code: Photosystem II reaction center protein T (35 aa).

Residues 3 to 23 form a helical membrane-spanning segment; that stretch reads ALVYTFLLVSTLGIIFFAIFF.

It belongs to the PsbT family. In terms of assembly, PSII is composed of 1 copy each of membrane proteins PsbA, PsbB, PsbC, PsbD, PsbE, PsbF, PsbH, PsbI, PsbJ, PsbK, PsbL, PsbM, PsbT, PsbY, PsbZ, Psb30/Ycf12, at least 3 peripheral proteins of the oxygen-evolving complex and a large number of cofactors. It forms dimeric complexes.

It localises to the plastid. The protein localises to the chloroplast thylakoid membrane. Its function is as follows. Found at the monomer-monomer interface of the photosystem II (PS II) dimer, plays a role in assembly and dimerization of PSII. PSII is a light-driven water plastoquinone oxidoreductase, using light energy to abstract electrons from H(2)O, generating a proton gradient subsequently used for ATP formation. This Amborella trichopoda protein is Photosystem II reaction center protein T.